Here is a 342-residue protein sequence, read N- to C-terminus: Ferredoxin--NADP reductase (342 aa).

FAD is bound by residues Cys-17, Asp-36, Gln-44, Tyr-49, Val-89, Phe-124, Asp-289, and Thr-330.

This sequence belongs to the ferredoxin--NADP reductase type 2 family. In terms of assembly, homodimer. FAD serves as cofactor.

It catalyses the reaction 2 reduced [2Fe-2S]-[ferredoxin] + NADP(+) + H(+) = 2 oxidized [2Fe-2S]-[ferredoxin] + NADPH. The sequence is that of Ferredoxin--NADP reductase from Rhodopseudomonas palustris (strain ATCC BAA-98 / CGA009).